A 445-amino-acid chain; its full sequence is C4-dicarboxylate transport protein 2 (445 aa).

8 consecutive transmembrane segments (helical) span residues 24 to 44 (ILYV…WLFP), 62 to 82 (LIKM…IAHI), 96 to 116 (LVYF…VGNL), 163 to 183 (GDIL…MALG), 201 to 221 (FGVI…AMAF), 237 to 257 (LIAL…GLIA), 334 to 354 (ALGV…AMLT), and 366 to 386 (FITL…GMAI).

Belongs to the dicarboxylate/amino acid:cation symporter (DAACS) (TC 2.A.23) family.

It localises to the cell inner membrane. In terms of biological role, responsible for the transport of dicarboxylates such as succinate, fumarate, and malate from the periplasm across the membrane. The protein is C4-dicarboxylate transport protein 2 of Bradyrhizobium sp. (strain ORS 278).